The following is a 98-amino-acid chain: Putative defensin-like protein 239 (98 aa).

The N-terminal stretch at Met-1–Gly-23 is a signal peptide. 4 disulfide bridges follow: Cys-29–Cys-89, Cys-39–Cys-69, Cys-47–Cys-86, and Cys-67–Cys-88.

The protein belongs to the DEFL family.

It is found in the secreted. The chain is Putative defensin-like protein 239 (SCRL17) from Arabidopsis thaliana (Mouse-ear cress).